The chain runs to 340 residues: MEF2 transcription factor homolog (340 aa).

One can recognise an MADS-box domain in the interval 1-61 (MGRKKIQITR…NKLFQYASTD (61 aa)). Disordered regions lie at residues 90 to 112 (RKEG…TSPV), 193 to 217 (NQRN…LDFP), 258 to 283 (LQQR…NGTS), and 312 to 340 (PNTY…QQLT). A compositionally biased stretch (low complexity) spans 200–211 (SSTSVAPSSSSS). Polar residues predominate over residues 258 to 268 (LQQRPVSQPAP). Over residues 269-283 (SISNSSTNGISNGTS) the composition is skewed to low complexity. The segment covering 318–332 (MEPHSPPEKRPRITT) has biased composition (basic and acidic residues).

The protein belongs to the MEF2 family. In terms of assembly, interacts with histone deacetylase hda-4 isoform b.

It localises to the nucleus. Transcription regulator. Binds specifically to the MEF2 element, 5'-[TC]TA[AT][AT][AT][AT]TA[AG]-3' in the regulatory elements of target genes, such as chemoreceptors str-1 and srh-234. Involved in transduction of sensory signals, together with egl-4, kin-29 and hda-4; binding to histone deacetylase hda-4 enables negative modulation of chemoreceptor gene expression in chemosensory neurons. In response to starvation, negatively modulates expression of chemoreceptor srh-234 in ADL sensory neurons, acting in concert with basic helix-loop-helix (bHLH) transcription factors. Plays a role in regulating muscle sensitivity to acetylcholine (ACh) and the magnitude of presynaptic ACh release via a retrograde signal, perhaps by indirectly decreasing Ras-related protein Rab-3 activity. This chain is MEF2 transcription factor homolog, found in Caenorhabditis elegans.